Reading from the N-terminus, the 59-residue chain is uncharacterized protein (59 aa).

This is an uncharacterized protein from Torque teno tupaia virus (isolate Tbc-TTV14).